Reading from the N-terminus, the 456-residue chain is Signal recognition particle 54 kDa protein (456 aa).

GTP-binding positions include 104-111 (GLYGNGKT), 184-188 (DTSGR), and 242-245 (TKMD).

The protein belongs to the GTP-binding SRP family. SRP54 subfamily. Part of the signal recognition particle protein translocation system, which is composed of SRP and FtsY. Archaeal SRP consists of a 7S RNA molecule of 300 nucleotides and two protein subunits: SRP54 and SRP19.

It localises to the cytoplasm. The catalysed reaction is GTP + H2O = GDP + phosphate + H(+). In terms of biological role, involved in targeting and insertion of nascent membrane proteins into the cytoplasmic membrane. Binds to the hydrophobic signal sequence of the ribosome-nascent chain (RNC) as it emerges from the ribosomes. The SRP-RNC complex is then targeted to the cytoplasmic membrane where it interacts with the SRP receptor FtsY. This Thermoplasma acidophilum (strain ATCC 25905 / DSM 1728 / JCM 9062 / NBRC 15155 / AMRC-C165) protein is Signal recognition particle 54 kDa protein.